The chain runs to 74 residues: Putative membrane protein insertion efficiency factor (74 aa).

This sequence belongs to the UPF0161 family.

It is found in the cell inner membrane. Could be involved in insertion of integral membrane proteins into the membrane. The sequence is that of Putative membrane protein insertion efficiency factor from Blochmanniella floridana.